Reading from the N-terminus, the 227-residue chain is UPF0173 metal-dependent hydrolase Cmaq_1073 (227 aa).

Belongs to the UPF0173 family.

The chain is UPF0173 metal-dependent hydrolase Cmaq_1073 from Caldivirga maquilingensis (strain ATCC 700844 / DSM 13496 / JCM 10307 / IC-167).